We begin with the raw amino-acid sequence, 450 residues long: Phosphoglucosamine mutase (450 aa).

The Phosphoserine intermediate role is filled by Ser-104. Positions 104, 243, 245, and 247 each coordinate Mg(2+). Residue Ser-104 is modified to Phosphoserine.

This sequence belongs to the phosphohexose mutase family. It depends on Mg(2+) as a cofactor. In terms of processing, activated by phosphorylation.

It carries out the reaction alpha-D-glucosamine 1-phosphate = D-glucosamine 6-phosphate. Functionally, catalyzes the conversion of glucosamine-6-phosphate to glucosamine-1-phosphate. This chain is Phosphoglucosamine mutase, found in Cutibacterium acnes (strain DSM 16379 / KPA171202) (Propionibacterium acnes).